We begin with the raw amino-acid sequence, 215 residues long: MKYQLTAMEARVIGCLLEKQVTTPEQYPLSVNGVVTACNQKTNREPVMNLSESEVQEQLDNLVKRHYLRTVSGFGNRVTKYEQRFCNSEFGDLKLSAAEVALITTLLLRGAQTPGELRSRAARMYEFSDMAEVESTLEQLASREDGPFVVRLAREPGKRESRYMHLFSGEVENPPAVTDMSNAADGDLQARVEALEIEVAELKQRLDSLLAHLGD.

Lysine 80 carries the post-translational modification N6-acetyllysine.

It belongs to the UPF0502 family.

This Escherichia coli O127:H6 (strain E2348/69 / EPEC) protein is UPF0502 protein YceH.